The primary structure comprises 71 residues: Pseudonajatoxin b (71 aa).

5 disulfide bridges follow: Cys-3–Cys-21, Cys-14–Cys-42, Cys-27–Cys-31, Cys-46–Cys-58, and Cys-59–Cys-64.

Belongs to the three-finger toxin family. Long-chain subfamily. Type II alpha-neurotoxin sub-subfamily. As to expression, expressed by the venom gland.

It localises to the secreted. Functionally, binds with high affinity to muscular (alpha-1/CHRNA1) and neuronal (alpha-7/CHRNA7) nicotinic acetylcholine receptor (nAChR) and inhibits acetylcholine from binding to the receptor, thereby impairing neuromuscular and neuronal transmission. This is Pseudonajatoxin b from Pseudonaja textilis (Eastern brown snake).